We begin with the raw amino-acid sequence, 379 residues long: Wnt inhibitory factor 1 (379 aa).

Residues 1–28 (MARRSAFPAAALWLWSILLCLLALRAEA) form the signal peptide. The region spanning 38-177 (LWIDAHQARV…PQNAIFFKTC (140 aa)) is the WIF domain. Residue Asn88 is glycosylated (N-linked (GlcNAc...) asparagine). Disulfide bonds link Cys140–Cys177, Cys182–Cys192, Cys186–Cys198, Cys200–Cys209, Cys214–Cys224, Cys218–Cys230, and Cys232–Cys241. EGF-like domains lie at 178-210 (QQAECPGGCRNGGFCNERRICECPDGFHGPHCE), 211-242 (KALCTPRCMNGGLCVTPGFCICPPGFYGVNCD), 243-271 (KANCSTTCFNGGTCFYPGKCICPPGLEGE), 274-306 (EISKCPQPCRNGGKCIGKSKCKCSKGYQGDLCS), and 307-338 (KPVCEPGCGAHGTCHEPNKCQCQEGWHGRHCN). N-linked (GlcNAc...) asparagine glycosylation is present at Asn245. Intrachain disulfides connect Cys246/Cys256, Cys250/Cys262, Cys278/Cys288, Cys282/Cys294, Cys296/Cys305, Cys310/Cys320, Cys314/Cys326, and Cys328/Cys337. Residues 354-379 (AQLRQHTPSLKKAEERRDPPESNYIW) are disordered. Residues 364-373 (KKAEERRDPP) show a composition bias toward basic and acidic residues.

In terms of assembly, interacts with MYOC.

The protein resides in the secreted. Its function is as follows. Binds to WNT proteins and inhibits their activities. May be involved in mesoderm segmentation. This Homo sapiens (Human) protein is Wnt inhibitory factor 1 (WIF1).